The following is a 949-amino-acid chain: Translation initiation factor IF-2 (949 aa).

Disordered stretches follow at residues 50 to 206 (FTEK…GAAR) and 220 to 359 (QNAE…TERK). 2 stretches are compositionally biased toward basic and acidic residues: residues 52 to 84 (EKPKTETKPKIKAVDETPKPKLEAVKEEVKVEK) and 104 to 143 (FKAEREARAKEQAARQKRNAQESTERRQDNRYQQKNDQGS). 2 stretches are compositionally biased toward polar residues: residues 144-154 (KNRNFNKSQGQ) and 164-180 (GSQQNNRQDSRIASNKP). Residues 187–206 (NAANRNQNNSQQERQVGAAR) show a composition bias toward low complexity. Over residues 224-275 (YMRHKETQLREQEEARRLAERAKEEARLAAQKAAEEKAKEAEKAAKTERFEP) the composition is skewed to basic and acidic residues. Residues 319–336 (KSWNNQNQVRNQRNSNWN) show a composition bias toward low complexity. Positions 450 to 619 (ERAPVVTIMG…LLVAEVEELK (170 aa)) constitute a tr-type G domain. The tract at residues 459 to 466 (GHVDHGKT) is G1. Residue 459–466 (GHVDHGKT) participates in GTP binding. The interval 484-488 (GITQH) is G2. A G3 region spans residues 505-508 (DTPG). GTP is bound by residues 505-509 (DTPGH) and 559-562 (NKID). Residues 559-562 (NKID) form a G4 region. The G5 stretch occupies residues 595–597 (SAK).

It belongs to the TRAFAC class translation factor GTPase superfamily. Classic translation factor GTPase family. IF-2 subfamily.

Its subcellular location is the cytoplasm. Functionally, one of the essential components for the initiation of protein synthesis. Protects formylmethionyl-tRNA from spontaneous hydrolysis and promotes its binding to the 30S ribosomal subunits. Also involved in the hydrolysis of GTP during the formation of the 70S ribosomal complex. This Streptococcus uberis (strain ATCC BAA-854 / 0140J) protein is Translation initiation factor IF-2.